Here is a 294-residue protein sequence, read N- to C-terminus: Elongation factor Ts (294 aa).

Residues 79-82 are involved in Mg(2+) ion dislocation from EF-Tu; the sequence is TDFV.

The protein belongs to the EF-Ts family.

Its subcellular location is the cytoplasm. Its function is as follows. Associates with the EF-Tu.GDP complex and induces the exchange of GDP to GTP. It remains bound to the aminoacyl-tRNA.EF-Tu.GTP complex up to the GTP hydrolysis stage on the ribosome. This chain is Elongation factor Ts (tsf), found in Geobacillus kaustophilus (strain HTA426).